The following is a 97-amino-acid chain: Defensin-like protein 246 (97 aa).

The signal sequence occupies residues 1-24 (MKFVAIFLVTCVLFSLFPSHLSQG). Disulfide bonds link Cys-39–Cys-96, Cys-50–Cys-79, Cys-58–Cys-89, and Cys-77–Cys-91.

This sequence belongs to the DEFL family. In terms of tissue distribution, flower buds and stems.

Its subcellular location is the secreted. The sequence is that of Defensin-like protein 246 (SCRL5) from Arabidopsis thaliana (Mouse-ear cress).